The chain runs to 190 residues: MDRTEQKSIIEGLLFVSGDEGIYPEQIAKVLEIEGNEVIDILEEMQKECEGAHRGLQIVQYAKVYRFATKKEHASYYQKLIDIPTAASLSQAALETLAIVAYRQPITRTEMEEIRGVKTDKALQTLVSHLLIKEMGRAEGPGRPILYGTTKEFLDTFGLKTLDDLPPLSEENEQMNEADLFFGSLQEISK.

The protein belongs to the ScpB family. In terms of assembly, homodimer. Homodimerization may be required to stabilize the binding of ScpA to the Smc head domains. Component of a cohesin-like complex composed of ScpA, ScpB and the Smc homodimer, in which ScpA and ScpB bind to the head domain of Smc. The presence of the three proteins is required for the association of the complex with DNA.

It is found in the cytoplasm. Functionally, participates in chromosomal partition during cell division. May act via the formation of a condensin-like complex containing Smc and ScpA that pull DNA away from mid-cell into both cell halves. The protein is Segregation and condensation protein B of Bacillus cereus (strain ZK / E33L).